Here is a 262-residue protein sequence, read N- to C-terminus: Type III pantothenate kinase (262 aa).

9 to 16 (DAGNSRIK) provides a ligand contact to ATP. Substrate contacts are provided by residues Y96 and 103–106 (GSDR). Residue D105 is the Proton acceptor of the active site. T129 lines the ATP pocket. T189 is a substrate binding site.

Belongs to the type III pantothenate kinase family. In terms of assembly, homodimer. NH4(+) serves as cofactor. It depends on K(+) as a cofactor.

The protein localises to the cytoplasm. The catalysed reaction is (R)-pantothenate + ATP = (R)-4'-phosphopantothenate + ADP + H(+). Its pathway is cofactor biosynthesis; coenzyme A biosynthesis; CoA from (R)-pantothenate: step 1/5. Catalyzes the phosphorylation of pantothenate (Pan), the first step in CoA biosynthesis. In Burkholderia ambifaria (strain MC40-6), this protein is Type III pantothenate kinase.